The sequence spans 211 residues: Minor capsid protein VP2 (211 aa).

It belongs to the norovirus VP2 family. Homooligomer. The portal-like structure consists in 12 copies of VP2. Interacts with capsid protein VP1.

It is found in the virion. Its subcellular location is the host cytoplasm. Minor structural protein that forms a portal-like structure at a unique three-fold axis of symmetry, following binding to the host receptor. The channel formed by VP2 may allow the delivery of the viral genome through the host endosomal membrane. The chain is Minor capsid protein VP2 from Homo sapiens (Human).